We begin with the raw amino-acid sequence, 452 residues long: MNHLVLGYVGLVIGVIVTKKSMVWRVGQVGSVLLMLPATVLVNMNMTISNVSYMMTSDFVSLGLTVLSIWLLPLMLLASQQHMVSESLIYQRVFVGCQVFLTGALVLAFMASDLLLFYIAFESTLLPTLMLITRWGAQKERYQAGTYFMFFTLVGSLPLLICLIGQYQMVGSLALDLSYEGVFQLSYLVNFWWVGCILAFLVKLPLYGVHLWLPKAHVEAPIAGSMVLAGVLLKLGGYGMMRVSLMWGATAMLSSEVFLALALWGIVVMGGICLRQTDLKSLIAYSSVGHMALVVGGVLTGVAWGYNGAMVLMIAHGLVSSCLFCLANLWYERSSTRNLSGSRGLIMIFPLISLGWFLMSLMNMALPPAINLFGELVAMVALYNWSPYSIVYMSLGAVLTAAYSLYLFGMSQWGNTMKNYKNLYTITSREYLLTTLHLVPAIYLIFYLGLMF.

14 helical membrane-spanning segments follow: residues 4–24, 29–49, 59–79, 88–110, 114–136, 144–164, 182–202, 221–241, 252–272, 282–304, 309–331, 345–365, 390–410, and 432–452; these read LVLG…SMVW, VGSV…MTIS, FVSL…LLAS, LIYQ…LAFM, LLLF…TRWG, AGTY…ICLI, VFQL…AFLV, PIAG…YGMM, MLSS…MGGI, LIAY…GVAW, AMVL…NLWY, LIMI…MNMA, IVYM…LFGM, and LLTT…GLMF.

The protein belongs to the complex I subunit 4 family.

The protein localises to the mitochondrion membrane. The enzyme catalyses a ubiquinone + NADH + 5 H(+)(in) = a ubiquinol + NAD(+) + 4 H(+)(out). In terms of biological role, core subunit of the mitochondrial membrane respiratory chain NADH dehydrogenase (Complex I) that is believed to belong to the minimal assembly required for catalysis. Complex I functions in the transfer of electrons from NADH to the respiratory chain. The immediate electron acceptor for the enzyme is believed to be ubiquinone. The chain is NADH-ubiquinone oxidoreductase chain 4 (ND4) from Branchiostoma lanceolatum (Common lancelet).